We begin with the raw amino-acid sequence, 508 residues long: UDP-N-acetylmuramoyl-L-alanyl-D-glutamate--L-lysine ligase (508 aa).

Ser47 is a UDP-N-acetyl-alpha-D-muramoyl-L-alanyl-D-glutamate binding site. 124 to 130 (GTKGKTT) serves as a coordination point for ATP. UDP-N-acetyl-alpha-D-muramoyl-L-alanyl-D-glutamate contacts are provided by residues 168-169 (TT), Ser195, and Arg203. Lys237 carries the N6-carboxylysine modification. Residues 425–428 (DDPA) carry the L-lysine recognition motif motif.

It belongs to the MurCDEF family. MurE subfamily. Post-translationally, carboxylation is probably crucial for Mg(2+) binding and, consequently, for the gamma-phosphate positioning of ATP.

It localises to the cytoplasm. It carries out the reaction UDP-N-acetyl-alpha-D-muramoyl-L-alanyl-D-glutamate + L-lysine + ATP = UDP-N-acetyl-alpha-D-muramoyl-L-alanyl-gamma-D-glutamyl-L-lysine + ADP + phosphate + H(+). It participates in cell wall biogenesis; peptidoglycan biosynthesis. Its function is as follows. Catalyzes the addition of L-lysine to the nucleotide precursor UDP-N-acetylmuramoyl-L-alanyl-D-glutamate (UMAG) in the biosynthesis of bacterial cell-wall peptidoglycan. The protein is UDP-N-acetylmuramoyl-L-alanyl-D-glutamate--L-lysine ligase of Enterococcus faecalis (strain ATCC 700802 / V583).